The following is a 408-amino-acid chain: Aspartate aminotransferase (408 aa).

Residues G45, W134, and N184 each coordinate L-aspartate. Position 247 is an N6-(pyridoxal phosphate)lysine (K247). R382 lines the L-aspartate pocket.

Belongs to the class-I pyridoxal-phosphate-dependent aminotransferase family. In terms of assembly, homodimer. Requires pyridoxal 5'-phosphate as cofactor.

It is found in the cytoplasm. It catalyses the reaction L-aspartate + 2-oxoglutarate = oxaloacetate + L-glutamate. Catalyzes the reversible conversion of aspartate and 2-oxoglutarate to glutamate and oxaloacetate. Does not have prephenate aminotransferase activity. The sequence is that of Aspartate aminotransferase from Streptomyces avermitilis (strain ATCC 31267 / DSM 46492 / JCM 5070 / NBRC 14893 / NCIMB 12804 / NRRL 8165 / MA-4680).